A 405-amino-acid polypeptide reads, in one-letter code: MANIVVKRLERTPIDEIPVEIVERKGIGHPDSICDGIAESVSVALCKMYKEKMGVVLHHNTDQVELVGGYAYLELGGGCMVSPIYILLSGRATMEVLDKETGKIIKLPVNTTAVNAARDYLKKALRNMDLEKDVVVDCRIGQGSVDLVEVFDRKRTEIPHANDTSFGVGHAPLSTTEKIVLETEKLLNSDALKAEIPAVGEDIKVMGLREGKKITLTIAMAAVDKYVNSCADYVNVKELAKAKVEENAKKYLDGHELEVCINTADDDEDCIFLTVTGTSAEMGDDGSVGRGNRANGLITPFRPMSMEATSGKNPITHIGKIYNILSNIIAEDVAKIEGVRECQIRILSQIGKPVTEPKILDIEMIPENGFELEELSPKAKEVAQKWLDNISEVTERIVSGNVTTF.

ATP is bound at residue 141–146 (GQGSVD).

This sequence belongs to the AdoMet synthase 2 family. Mg(2+) is required as a cofactor.

The enzyme catalyses L-methionine + ATP + H2O = S-adenosyl-L-methionine + phosphate + diphosphate. The protein operates within amino-acid biosynthesis; S-adenosyl-L-methionine biosynthesis; S-adenosyl-L-methionine from L-methionine: step 1/1. Functionally, catalyzes the formation of S-adenosylmethionine from methionine and ATP. In Methanococcus maripaludis (Methanococcus deltae), this protein is S-adenosylmethionine synthase.